A 305-amino-acid polypeptide reads, in one-letter code: Endonuclease 1 (305 aa).

A signal peptide spans 1–28 (MASAFRSSTRLILVLGILILCSVSSVRS). 2 residues coordinate a divalent metal cation: W29 and H34. A substrate-binding site is contributed by 29 to 34 (WSKEGH). Cysteines 38 and 69 form a disulfide. Residues D73 and H88 each coordinate a divalent metal cation. Substrate is bound by residues 73–79 (DQIRHWY), 88–91 (HYID), and 98–103 (SYEYSR). 3 disulfides stabilise this stretch: C97–C249, C105–C115, and C230–C236. Substrate-binding residues include N122 and Y139. A glycan (N-linked (GlcNAc...) asparagine) is linked at N122. An N-linked (GlcNAc...) asparagine glycan is attached at N140. A divalent metal cation-binding residues include H150, D154, H160, H184, and D188. The interval 150–199 (HFMGDIHQPMHVGFTSDEGGNTIDLRWYKHKSNLHHVWDREIILTALKEN) is substrate binding. An N-linked (GlcNAc...) asparagine glycan is attached at N214. The propeptide at 287–305 (MILNRVFSDDHAIAGVAAT) is removed in mature form.

Belongs to the nuclease type I family. In terms of assembly, monomer. It depends on Mn(2+) as a cofactor. The cofactor is Ca(2+). Mostly expressed in flowers and during leaf and stem senescence, and, to a lower extent, detectable at low levels in roots, leaves, and stems. Particularly expressed in senescing tissues in a NAC92/ORE1-dependent manner.

The catalysed reaction is Endonucleolytic cleavage to 5'-phosphomononucleotide and 5'-phosphooligonucleotide end-products.. Functionally, endonuclease that can use RNA, single-stranded and double-stranded DNA as substrates. Hydrolyzes single-stranded DNA and RNA without apparent specificity for bases during senescence. Endonuclease that recognizes and cleaves all types of mismatches with high efficiency, including heteroduplex double-stranded DNA. Maybe involved in programmed cell death (PCD) and senescence. The chain is Endonuclease 1 from Arabidopsis thaliana (Mouse-ear cress).